A 489-amino-acid chain; its full sequence is GTPase Der (489 aa).

EngA-type G domains are found at residues 30–199 (PVVS…KDKP) and 227–403 (FRLA…SRSH). Residues 36-43 (GRQNVGKS), 85-89 (DTPGL), 151-154 (NKAD), 233-240 (GKPNSGKS), 280-284 (DTAGI), and 345-348 (NKWD) contribute to the GTP site. Residues 404–488 (RKVSTSELNK…PIRLEFRSDR (85 aa)) form the KH-like domain.

The protein belongs to the TRAFAC class TrmE-Era-EngA-EngB-Septin-like GTPase superfamily. EngA (Der) GTPase family. In terms of assembly, associates with the 50S ribosomal subunit.

GTPase that plays an essential role in the late steps of ribosome biogenesis. The sequence is that of GTPase Der from Leptospira interrogans serogroup Icterohaemorrhagiae serovar Lai (strain 56601).